A 441-amino-acid chain; its full sequence is COP9 signalosome complex subunit 1 (441 aa).

The interval 1 to 28 is disordered; that stretch reads MERDEEASGPMMEMCTNGGEETSNRRPI. The PCI domain occupies 230 to 400; that stretch reads KYKLAARKFL…KILYARHADQ (171 aa).

This sequence belongs to the CSN1 family. Component of the CSN complex, probably composed of CSN1, CSN2, CSN3, CSN4, CSN5 (CSN5A or CSN5B), CSN6 (CSN6A or CSN6B), CSN7 and CSN8. Interacts with itself and (via PCI domain) with CSN7 (via PCI domain). In the CSN complex, it probably interacts directly with CSN2, CSN3, CSN4 and CSN5B. Interacts with the 26S proteasome subunit RPN6. Interacts (via N-terminal domain) with TSA1 (via C-terminal domain). Binds to the translation initiation factors TIF3C1, TIF3E1 and TIF3H1. Expressed in leaves, flowers, immature siliques, and light-grown roots.

It localises to the cytoplasm. It is found in the nucleus. In terms of biological role, component of the COP9 signalosome complex (CSN), a complex involved in various cellular and developmental processes such as photomorphogenesis and auxin and jasmonate responses. The CSN complex is an essential regulator of the ubiquitin (Ubl) conjugation pathway by mediating the deneddylation of the cullin subunits of SCF-type E3 ligase complexes, leading to decrease the Ubl ligase activity of SCF. It is involved in repression of photomorphogenesis in darkness by regulating the activity of COP1-containing Ubl ligase complexes. The complex is also required for degradation of IAA6 by regulating the activity of the Ubl ligase SCF-TIR complex. In the complex, it plays a central role in CSN assembly. This is COP9 signalosome complex subunit 1 (CSN1) from Arabidopsis thaliana (Mouse-ear cress).